The chain runs to 189 residues: Ribulose bisphosphate carboxylase small subunit, chloroplastic (189 aa).

A chloroplast-targeting transit peptide spans 1 to 66 (MASSIMALSS…KTTSNGSRVR (66 aa)).

The protein belongs to the RuBisCO small chain family. Heterohexadecamer of 8 large and 8 small subunits.

It localises to the plastid. It is found in the chloroplast. RuBisCO catalyzes two reactions: the carboxylation of D-ribulose 1,5-bisphosphate, the primary event in carbon dioxide fixation, as well as the oxidative fragmentation of the pentose substrate. Both reactions occur simultaneously and in competition at the same active site. Although the small subunit is not catalytic it is essential for maximal activity. The polypeptide is Ribulose bisphosphate carboxylase small subunit, chloroplastic (Larix laricina (Tamarack)).